A 222-amino-acid polypeptide reads, in one-letter code: Protein-L-isoaspartate O-methyltransferase (222 aa).

Ser-69 is a catalytic residue.

The protein belongs to the methyltransferase superfamily. L-isoaspartyl/D-aspartyl protein methyltransferase family.

The protein resides in the cytoplasm. It carries out the reaction [protein]-L-isoaspartate + S-adenosyl-L-methionine = [protein]-L-isoaspartate alpha-methyl ester + S-adenosyl-L-homocysteine. Catalyzes the methyl esterification of L-isoaspartyl residues in peptides and proteins that result from spontaneous decomposition of normal L-aspartyl and L-asparaginyl residues. It plays a role in the repair and/or degradation of damaged proteins. The protein is Protein-L-isoaspartate O-methyltransferase of Caulobacter vibrioides (strain NA1000 / CB15N) (Caulobacter crescentus).